We begin with the raw amino-acid sequence, 197 residues long: MAKKKEVVRVAKLQFNAGQAKPGPELAGLGIVMPEFTKQFNDATRERSGEPVPVQIIVYKDKSFDFKLFTAPTSFMLKKAAGIKSGSANSKTTIVATIKKSQLEDIAKYKMPDLNTKNLEEAMHTIAGTARNMGILVEGYDDIVKAREEAKLAAKEAASAAAFEAKLESDAAQLLAENKQSAEVEVIKEKDKGNKDE.

This sequence belongs to the universal ribosomal protein uL11 family. In terms of assembly, part of the ribosomal stalk of the 50S ribosomal subunit. Interacts with L10 and the large rRNA to form the base of the stalk. L10 forms an elongated spine to which L12 dimers bind in a sequential fashion forming a multimeric L10(L12)X complex. In terms of processing, one or more lysine residues are methylated.

In terms of biological role, forms part of the ribosomal stalk which helps the ribosome interact with GTP-bound translation factors. This chain is Large ribosomal subunit protein uL11, found in Mycoplasma mobile (strain ATCC 43663 / 163K / NCTC 11711) (Mesomycoplasma mobile).